A 965-amino-acid chain; its full sequence is Glycine dehydrogenase (decarboxylating) (965 aa).

An N6-(pyridoxal phosphate)lysine modification is found at Lys711.

Belongs to the GcvP family. As to quaternary structure, the glycine cleavage system is composed of four proteins: P, T, L and H. The cofactor is pyridoxal 5'-phosphate.

The catalysed reaction is N(6)-[(R)-lipoyl]-L-lysyl-[glycine-cleavage complex H protein] + glycine + H(+) = N(6)-[(R)-S(8)-aminomethyldihydrolipoyl]-L-lysyl-[glycine-cleavage complex H protein] + CO2. Its function is as follows. The glycine cleavage system catalyzes the degradation of glycine. The P protein binds the alpha-amino group of glycine through its pyridoxal phosphate cofactor; CO(2) is released and the remaining methylamine moiety is then transferred to the lipoamide cofactor of the H protein. This chain is Glycine dehydrogenase (decarboxylating), found in Psychrobacter arcticus (strain DSM 17307 / VKM B-2377 / 273-4).